The following is a 221-amino-acid chain: Deoxyribose-phosphate aldolase (221 aa).

Aspartate 89 acts as the Proton donor/acceptor in catalysis. The active-site Schiff-base intermediate with acetaldehyde is lysine 151. Residue lysine 180 is the Proton donor/acceptor of the active site.

Belongs to the DeoC/FbaB aldolase family. DeoC type 1 subfamily.

It localises to the cytoplasm. It catalyses the reaction 2-deoxy-D-ribose 5-phosphate = D-glyceraldehyde 3-phosphate + acetaldehyde. The protein operates within carbohydrate degradation; 2-deoxy-D-ribose 1-phosphate degradation; D-glyceraldehyde 3-phosphate and acetaldehyde from 2-deoxy-alpha-D-ribose 1-phosphate: step 2/2. Functionally, catalyzes a reversible aldol reaction between acetaldehyde and D-glyceraldehyde 3-phosphate to generate 2-deoxy-D-ribose 5-phosphate. This is Deoxyribose-phosphate aldolase from Mesomycoplasma hyopneumoniae (strain J / ATCC 25934 / NCTC 10110) (Mycoplasma hyopneumoniae).